We begin with the raw amino-acid sequence, 880 residues long: Pentatricopeptide repeat-containing protein At3g07290, mitochondrial (880 aa).

Residues 1–89 constitute a mitochondrion transit peptide; the sequence is MLLIHIRSTR…RSDNDICVRF (89 aa). PPR repeat units follow at residues 159 to 193, 194 to 228, 229 to 259, 265 to 299, 300 to 334, 335 to 369, 370 to 404, 405 to 439, 440 to 474, 475 to 509, 510 to 544, 545 to 579, 580 to 614, 615 to 649, 650 to 684, 685 to 721, 738 to 768, 772 to 806, and 807 to 842; these read NYPC…GFVV, GMID…GFVL, DSHI…MSKE, NSVS…GCQP, STRT…GCKP, NVHT…RIFP, SVIT…ACKP, NVRT…GLSP, DIVS…DIEP, DCLT…GISL, DEVT…RILT, TPHS…GLVP, SVVT…GCLP, NVYP…GVSP, NHVT…GYEL, NDRI…ETDP, ISGL…VLER, LEKA…GFVP, and SFKS…GVVE.

The protein belongs to the PPR family. P subfamily.

Its subcellular location is the mitochondrion. The sequence is that of Pentatricopeptide repeat-containing protein At3g07290, mitochondrial from Arabidopsis thaliana (Mouse-ear cress).